We begin with the raw amino-acid sequence, 361 residues long: MKILITGGAGFIGSAVVRHIIKNTQDTVVNIDKLTYAGNLESLSDISESNRYNFEHADICDSAEITRIFEQYQPDAVMHLAAESHVDRSITGPAAFIETNIVGTYALLEVARKYWSALGEDKKNNFRFHHISTDEVYGDLPHPDEVENSVTLPLFTETTAYAPSSPYSASKASSDHLVRAWRRTYGLPTIVTNCSNNYGPYHFPEKLIPLVILNALEGKPLPIYGKGDQIRDWLYVEDHARALHMVVTEGKAGETYNIGGHNEKKNLDVVFTICDLLDEIVPKATSYREQITYVADRPGHDRRYAIDAGKISRELGWKPLETFESGIRKTVEWYLANTQWVNNVKSGAYQSWIEQNYEGRQ.

NAD(+) contacts are provided by residues 11–12, 32–35, 58–59, 80–84, and T99; these read FI, DKLT, DI, and LAAES. S84 provides a ligand contact to substrate. Position 133 (T133) interacts with substrate. Residue D134 is the Proton donor of the active site. Active-site proton acceptor residues include E135 and Y167. Position 167-171 (167-171) interacts with NAD(+); it reads YSASK. N196 provides a ligand contact to substrate. N197 contributes to the NAD(+) binding site. Residues 206–207, 222–224, R231, N266, 296–300, and Y357 contribute to the substrate site; these read KL, PIY, and DRPGH.

This sequence belongs to the NAD(P)-dependent epimerase/dehydratase family. dTDP-glucose dehydratase subfamily. As to quaternary structure, homodimer. The cofactor is NAD(+).

The catalysed reaction is dTDP-alpha-D-glucose = dTDP-4-dehydro-6-deoxy-alpha-D-glucose + H2O. It functions in the pathway carbohydrate biosynthesis; dTDP-L-rhamnose biosynthesis. The protein operates within bacterial outer membrane biogenesis; LPS O-antigen biosynthesis. In terms of biological role, catalyzes the dehydration of dTDP-D-glucose to form dTDP-6-deoxy-D-xylo-4-hexulose via a three-step process involving oxidation, dehydration and reduction. In Salmonella typhimurium (strain LT2 / SGSC1412 / ATCC 700720), this protein is dTDP-glucose 4,6-dehydratase.